The sequence spans 457 residues: Protein unc-93 homolog A (457 aa).

Transmembrane regions (helical) follow at residues 8–28 (VLVLSFGFLLLFTAYGGLQSL), 42–62 (ALSTLYGGMLLSSMFLPPVLI), 65–85 (LGCKWTLVLAMCCYVAFSLGN), 86–106 (FYASWYTLIPASVLVGLGAAA), and 140–160 (IFFLIFQSSGVWGNLISSLVF). N190 carries an N-linked (GlcNAc...) asparagine glycan. The next 6 helical transmembrane spans lie at 202 to 222 (TLLGIYTGCGFLAVLLMAVFL), 257 to 277 (LRLLILLPMLSGFEQAFLSGD), 291 to 311 (FVGYVMICFGAADALCSVLFG), 320 to 340 (TVLFALGAVTQLACIIALLLW), 344 to 364 (PSQLPVFFVFPSLWGMADAVW), and 395 to 415 (FVIAFGYSTFLCVSVKLYVLL). A disordered region spans residues 438 to 457 (GPLAAGRTKPAEDGATQTKL).

This sequence belongs to the unc-93 family.

It localises to the cell membrane. The sequence is that of Protein unc-93 homolog A (UNC93A) from Bos taurus (Bovine).